The sequence spans 489 residues: UDP-glycosyltransferase 85A1 (489 aa).

Residues serine 307, cysteine 364–glutamine 366, histidine 381–glutamate 389, and phenylalanine 403–glutamine 406 contribute to the UDP-alpha-D-glucose site.

It belongs to the UDP-glycosyltransferase family. Expressed in root tips, lateral root initials, root apex, shoots, leaf periphery, leaf primordia and flowers.

Functionally, involved in the O-glucosylation of trans-zeatin and dihydrozeatin. Also active in vitro on cis-zeatin. Not active on N-glucosylated substrates. In Arabidopsis thaliana (Mouse-ear cress), this protein is UDP-glycosyltransferase 85A1 (UGT85A1).